Reading from the N-terminus, the 250-residue chain is Carboxymethylproline synthase (250 aa).

Malonyl-CoA is bound at residue 60–64 (AGGDF).

Belongs to the enoyl-CoA hydratase/isomerase family. Homotrimer.

The enzyme catalyses (S)-1-pyrroline-5-carboxylate + malonyl-CoA + H2O + H(+) = (2S,5S)-5-carboxymethylproline + CO2 + CoA. It participates in antibiotic biosynthesis; carbapenem biosynthesis. In terms of biological role, catalyzes the formation of (2S,5S)-carboxymethylproline (t-CMP) from malonyl-CoA and (S)-1-pyrroline-5-carboxylate, the first step in the biosynthesis of (5R)-carbapen-2-em-3-carboxylate, a beta-lactam antibiotic of the carbapenem class. Also catalyzes the independent decarboxylation of malonyl-CoA and methylmalonyl-CoA and the hydrolysis of CoA esters such as acetyl-CoA and propionyl-CoA. Catalyzes the reaction with a C2 epimeric mixture of methylmalonyl-CoA to give a 55:45 mixture of (6R)- and (6S)-epimers of 6-methyl-t-CMP, under standard incubation conditions. This Pectobacterium carotovorum subsp. carotovorum (Erwinia carotovora subsp. carotovora) protein is Carboxymethylproline synthase.